We begin with the raw amino-acid sequence, 88 residues long: Small ribosomal subunit protein bS20 (88 aa).

Positions 1 to 23 (MPNTKSAEKALRVADANRQENRR) are enriched in basic and acidic residues. The segment at 1-29 (MPNTKSAEKALRVADANRQENRRAKSQVK) is disordered.

Belongs to the bacterial ribosomal protein bS20 family.

Functionally, binds directly to 16S ribosomal RNA. The polypeptide is Small ribosomal subunit protein bS20 (Dehalococcoides mccartyi (strain ATCC BAA-2100 / JCM 16839 / KCTC 5957 / BAV1)).